Reading from the N-terminus, the 414-residue chain is Clusterin-associated protein 1 (414 aa).

Residues 198–291 adopt a coiled-coil conformation; the sequence is KTKDLLNNVA…ERFEEAKNTL (94 aa). The tract at residues 305–414 is disordered; sequence LLKSGSNDDS…EPLDESDNDF (110 aa). 2 stretches are compositionally biased toward acidic residues: residues 312–328 and 360–389; these read DDSD…DSEL and DSDD…EDES. 3 positions are modified to phosphoserine: Ser314, Ser324, and Ser326. Ser410 carries the post-translational modification Phosphoserine.

Belongs to the CLUAP1 family. As to quaternary structure, interacts with CLU/clusterin. Interacts with UBXN10; the interaction is direct.

Its subcellular location is the cell projection. It is found in the cilium. It localises to the nucleus. In terms of biological role, required for cilia biogenesis. Appears to function within the multiple intraflagellar transport complex B (IFT-B). Key regulator of hedgehog signaling. The polypeptide is Clusterin-associated protein 1 (CLUAP1) (Macaca fascicularis (Crab-eating macaque)).